The primary structure comprises 491 residues: Inositol-pentakisphosphate 2-kinase (491 aa).

The short motif at 136–140 is the EXKPK motif element; the sequence is EIKPK. Ser282 carries the phosphoserine modification.

It belongs to the IPK1 type 2 family. As to expression, ubiquitously expressed, with high expression in heart, brain, testis and placenta.

The protein resides in the cytoplasm. It localises to the nucleus. The catalysed reaction is 1D-myo-inositol 1,3,4,5,6-pentakisphosphate + ATP = 1D-myo-inositol hexakisphosphate + ADP + H(+). Its function is as follows. Phosphorylates Ins(1,3,4,5,6)P5 at position 2 to form Ins(1,2,3,4,5,6)P6 (InsP6 or phytate). InsP6 is involved in many processes such as mRNA export, non-homologous end-joining, endocytosis, ion channel regulation. It also protects cells from TNF-alpha-induced apoptosis. This Homo sapiens (Human) protein is Inositol-pentakisphosphate 2-kinase (IPPK).